Here is a 514-residue protein sequence, read N- to C-terminus: Glutamate--cysteine ligase (514 aa).

Belongs to the glutamate--cysteine ligase type 1 family. Type 1 subfamily.

The enzyme catalyses L-cysteine + L-glutamate + ATP = gamma-L-glutamyl-L-cysteine + ADP + phosphate + H(+). Its pathway is sulfur metabolism; glutathione biosynthesis; glutathione from L-cysteine and L-glutamate: step 1/2. This chain is Glutamate--cysteine ligase, found in Enterobacter sp. (strain 638).